Consider the following 73-residue polypeptide: Disintegrin trigramin-beta-2 (73 aa).

A Disintegrin domain is found at 1-73; sequence EAGKDCDCGS…AGCPRNPFHA (73 aa). Intrachain disulfides connect Cys6-Cys21, Cys8-Cys16, Cys15-Cys38, Cys29-Cys35, Cys34-Cys59, and Cys47-Cys66. Positions 51 to 53 match the Cell attachment site motif; it reads RGD.

Belongs to the venom metalloproteinase (M12B) family. P-II subfamily. P-IIa sub-subfamily. In terms of assembly, monomer (disintegrin). Expressed by the venom gland.

It localises to the secreted. Its function is as follows. Inhibits fibrinogen interaction with platelets. Acts by binding to the alpha-IIb/beta-3 receptor (ITGA2B/ITGB3) on the platelet surface and inhibits aggregation induced by ADP, thrombin, platelet-activating factor and collagen. This chain is Disintegrin trigramin-beta-2, found in Craspedocephalus gramineus (Bamboo pit viper).